The primary structure comprises 564 residues: Septin-9 (564 aa).

N-acetylmethionine is present on M1. Phosphoserine is present on S12. T24 and T31 each carry phosphothreonine. Disordered stretches follow at residues 38–165 (VASS…PVTD) and 178–224 (PAEA…DSEV). K44 is modified (N6-acetyllysine). Phosphoserine is present on residues S64, S67, and S71. Residues 95 to 109 (DISSKQVESTASTPG) show a composition bias toward polar residues. Residues 116 to 134 (KRAEVLGHKTPEPVPRRTE) show a composition bias toward basic and acidic residues. A Phosphothreonine modification is found at T125. A compositionally biased stretch (polar residues) spans 190–203 (TLENSEAPMSQLQS). At Y258 the chain carries Phosphotyrosine. The region spanning 275–546 (QGFEFNIMVV…EAYRVKRLNE (272 aa)) is the Septin-type G domain. The G1 motif stretch occupies residues 285-292 (GQSGLGKS). 285-292 (GQSGLGKS) provides a ligand contact to GTP. 2 positions are modified to phosphoserine: S307 and S312. Residues T319, G345, 425 to 433 (KADTLTLEE), G480, and R495 contribute to the GTP site. A G3 motif region spans residues 342–345 (DTPG). The segment at 424–427 (AKAD) is G4 motif.

The protein belongs to the TRAFAC class TrmE-Era-EngA-EngB-Septin-like GTPase superfamily. Septin GTPase family. Septins polymerize into heterooligomeric protein complexes that form filaments, and associate with cellular membranes, actin filaments, and microtubules. GTPase activity is required for filament formation. Interacts with SEPTIN2, SEPTIN6, SEPTIN7, SEPTIN11 and SEPTIN14. Interacts with RTKN and ARHGEF18. In terms of tissue distribution, expressed in the brain, mainly in the perikarya and processes of astrocytes in the cerebellum, dentate gyrus and corpus callosum (at protein level). In the sciatic nerve, highly expressed in Schwann cells (at protein level). Isoforms are differentially expressed in testes, kidney, liver, heart, spleen and brain. Undetectable in skeletal muscle.

The protein localises to the cytoplasm. It is found in the cytoskeleton. In terms of biological role, filament-forming cytoskeletal GTPase. May play a role in cytokinesis (Potential). The protein is Septin-9 of Rattus norvegicus (Rat).